Consider the following 446-residue polypeptide: tRNA-2-methylthio-N(6)-dimethylallyladenosine synthase (446 aa).

Residues 6-122 (RRYHITTFGC…LGDLLQQVFD (117 aa)) form the MTTase N-terminal domain. The [4Fe-4S] cluster site is built by Cys-15, Cys-51, Cys-85, Cys-157, Cys-161, and Cys-164. The Radical SAM core domain occupies 143 to 380 (RDSNITAWVN…NHLVATKAAE (238 aa)). Residues 383–446 (QRYLGRIEEI…RPFSLTGVIF (64 aa)) form the TRAM domain.

Belongs to the methylthiotransferase family. MiaB subfamily. Monomer. Requires [4Fe-4S] cluster as cofactor.

It is found in the cytoplasm. The enzyme catalyses N(6)-dimethylallyladenosine(37) in tRNA + (sulfur carrier)-SH + AH2 + 2 S-adenosyl-L-methionine = 2-methylsulfanyl-N(6)-dimethylallyladenosine(37) in tRNA + (sulfur carrier)-H + 5'-deoxyadenosine + L-methionine + A + S-adenosyl-L-homocysteine + 2 H(+). Functionally, catalyzes the methylthiolation of N6-(dimethylallyl)adenosine (i(6)A), leading to the formation of 2-methylthio-N6-(dimethylallyl)adenosine (ms(2)i(6)A) at position 37 in tRNAs that read codons beginning with uridine. The protein is tRNA-2-methylthio-N(6)-dimethylallyladenosine synthase of Microcystis aeruginosa (strain NIES-843 / IAM M-2473).